The primary structure comprises 145 residues: Mannitol-specific phosphotransferase enzyme IIA component (145 aa).

The PTS EIIA type-2 domain maps to 2 to 145; sequence ENLTNISIEL…EEITENLAIA (144 aa). His-62 acts as the Tele-phosphohistidine intermediate in catalysis. His-62 carries the phosphohistidine; by HPr modification.

It is found in the cytoplasm. Its function is as follows. The phosphoenolpyruvate-dependent sugar phosphotransferase system (sugar PTS), a major carbohydrate active transport system, catalyzes the phosphorylation of incoming sugar substrates concomitantly with their translocation across the cell membrane. The enzyme II CmtAB PTS system is involved in D-mannitol transport. This Enterococcus faecalis (strain ATCC 700802 / V583) protein is Mannitol-specific phosphotransferase enzyme IIA component.